A 151-amino-acid polypeptide reads, in one-letter code: Putative pre-16S rRNA nuclease (151 aa).

It belongs to the YqgF nuclease family.

The protein resides in the cytoplasm. Functionally, could be a nuclease involved in processing of the 5'-end of pre-16S rRNA. The chain is Putative pre-16S rRNA nuclease from Nostoc sp. (strain PCC 7120 / SAG 25.82 / UTEX 2576).